The following is a 485-amino-acid chain: Glutamyl-tRNA(Gln) amidotransferase subunit A (485 aa).

Residues K79 and S154 each act as charge relay system in the active site. The active-site Acyl-ester intermediate is the S178.

It belongs to the amidase family. GatA subfamily. Heterotrimer of A, B and C subunits.

It carries out the reaction L-glutamyl-tRNA(Gln) + L-glutamine + ATP + H2O = L-glutaminyl-tRNA(Gln) + L-glutamate + ADP + phosphate + H(+). Functionally, allows the formation of correctly charged Gln-tRNA(Gln) through the transamidation of misacylated Glu-tRNA(Gln) in organisms which lack glutaminyl-tRNA synthetase. The reaction takes place in the presence of glutamine and ATP through an activated gamma-phospho-Glu-tRNA(Gln). The chain is Glutamyl-tRNA(Gln) amidotransferase subunit A from Staphylococcus epidermidis (strain ATCC 35984 / DSM 28319 / BCRC 17069 / CCUG 31568 / BM 3577 / RP62A).